The following is a 337-amino-acid chain: Ketol-acid reductoisomerase (NADP(+)) (337 aa).

The 181-residue stretch at 3-183 (IELFYDADAD…GGGRAGIIPT (181 aa)) folds into the KARI N-terminal Rossmann domain. NADP(+) is bound by residues 26–29 (YGSQ), arginine 49, serine 52, serine 54, and 84–87 (DTSQ). Residue histidine 109 is part of the active site. NADP(+) is bound at residue glycine 135. The KARI C-terminal knotted domain occupies 184-329 (TFEAETVTDL…AKLRDLMSWV (146 aa)). Positions 192, 196, 228, and 232 each coordinate Mg(2+). Serine 253 lines the substrate pocket.

This sequence belongs to the ketol-acid reductoisomerase family. Requires Mg(2+) as cofactor.

It carries out the reaction (2R)-2,3-dihydroxy-3-methylbutanoate + NADP(+) = (2S)-2-acetolactate + NADPH + H(+). It catalyses the reaction (2R,3R)-2,3-dihydroxy-3-methylpentanoate + NADP(+) = (S)-2-ethyl-2-hydroxy-3-oxobutanoate + NADPH + H(+). Its pathway is amino-acid biosynthesis; L-isoleucine biosynthesis; L-isoleucine from 2-oxobutanoate: step 2/4. It participates in amino-acid biosynthesis; L-valine biosynthesis; L-valine from pyruvate: step 2/4. Involved in the biosynthesis of branched-chain amino acids (BCAA). Catalyzes an alkyl-migration followed by a ketol-acid reduction of (S)-2-acetolactate (S2AL) to yield (R)-2,3-dihydroxy-isovalerate. In the isomerase reaction, S2AL is rearranged via a Mg-dependent methyl migration to produce 3-hydroxy-3-methyl-2-ketobutyrate (HMKB). In the reductase reaction, this 2-ketoacid undergoes a metal-dependent reduction by NADPH to yield (R)-2,3-dihydroxy-isovalerate. The chain is Ketol-acid reductoisomerase (NADP(+)) from Corynebacterium efficiens (strain DSM 44549 / YS-314 / AJ 12310 / JCM 11189 / NBRC 100395).